Here is a 1413-residue protein sequence, read N- to C-terminus: Alpha-latrocrustotoxin-Lt1a (1413 aa).

The propeptide occupies 1–28 (VSIFIFHFSANILVRNSEMKGKRVISKR). A helix H8 is the probable transmembrane region of the tetrameric pore inserted in the target cell membrane region spans residues 238-257 (ALFALFYGTQTFISIMFYLV). ANK repeat units lie at residues 457–490 (DIHR…QVGA), 494–524 (MGRK…LLNV), 528–557 (NGYT…DVNV), 562–592 (NELT…DVNA), 596–625 (AGFT…GINI), 629–658 (SGLT…KVKL), 664–694 (NGMT…DVNA), 699–729 (KNWT…DIST), 733–762 (QAIT…VVDQ), 766–795 (NGFT…NINA), 799–828 (DGST…NIKA), 832–861 (INQM…SLMN), 866–895 (RDEY…DVNE), 899–928 (DGNT…DFRL), 965–995 (RGKT…TLNE), 996–1026 (DQCS…NPTA), 1031–1072 (NQVS…DINK), 1077–1106 (QQST…DPNK), 1109–1139 (RGDP…DVNT), and 1143–1172 (EQFT…DVNA). The propeptide occupies 1193 to 1413 (RSLGRRFFRN…NRPTNVLQIK (221 aa)).

This sequence belongs to the cationic peptide 01 (latrotoxin) family. 01 (alpha-latrocrustotoxin) subfamily. In terms of assembly, homotetramer in membranes. Expressed by the venom gland.

It localises to the secreted. Its subcellular location is the target cell membrane. In terms of biological role, crustacean-selective presynaptic neurotoxin that induces neurotransmitter exocytosis. May bind to crustacean neurexin-1 homolog, adhesion G protein-coupled receptor L1 homolog, and receptor-type tyrosine-protein phosphatase S homolog, and induces neurotransmitter exocytosis both by forming tetrameric pores in membranes and signaling via G protein-coupled receptor. This recombinant protein form channels in artificial membrane bilayers, that are stabilized by calcium ions and allow calcium flux at negative membrane potentials. The chain is Alpha-latrocrustotoxin-Lt1a from Latrodectus tredecimguttatus (Mediterranean black widow spider).